The chain runs to 161 residues: Effector CFEM5 (161 aa).

The signal sequence occupies residues 1 to 23 (MFSLTKSVLFTSIVAIAAQATTA). The region spanning 24-126 (VSSPTQTSLP…KVLDAVVASA (103 aa)) is the CFEM domain. Disulfide bonds link cysteine 46/cysteine 78, cysteine 56/cysteine 63, and cysteine 65/cysteine 100. Aspartate 60 is a heme binding site.

It belongs to the RBT5 family. Interacts with Z.mays LRR5; the interaction is direct. Interacts with Z.mays WAK17 isoform 2; the interaction is direct.

It is found in the membrane. The protein localises to the secreted. Suppresses host programmed cell death during infection by binding to Z.mays WAK17 isoform 2 and Z.mays LRR5, to prevent activation of Z.mays WAK17 isoform 1 and the downstream hypersensitive response. This chain is Effector CFEM5, found in Gibberella zeae (strain ATCC MYA-4620 / CBS 123657 / FGSC 9075 / NRRL 31084 / PH-1) (Wheat head blight fungus).